A 179-amino-acid polypeptide reads, in one-letter code: Large ribosomal subunit protein uL5 (179 aa).

It belongs to the universal ribosomal protein uL5 family. As to quaternary structure, part of the 50S ribosomal subunit; part of the 5S rRNA/L5/L18/L25 subcomplex. Contacts the 5S rRNA and the P site tRNA. Forms a bridge to the 30S subunit in the 70S ribosome.

This is one of the proteins that bind and probably mediate the attachment of the 5S RNA into the large ribosomal subunit, where it forms part of the central protuberance. In the 70S ribosome it contacts protein S13 of the 30S subunit (bridge B1b), connecting the 2 subunits; this bridge is implicated in subunit movement. Contacts the P site tRNA; the 5S rRNA and some of its associated proteins might help stabilize positioning of ribosome-bound tRNAs. The protein is Large ribosomal subunit protein uL5 of Bacillus anthracis (strain A0248).